Consider the following 239-residue polypeptide: Ribosomal RNA small subunit methyltransferase G (239 aa).

Residues Gly-77, Phe-82, 128-129, and Arg-147 each bind S-adenosyl-L-methionine; that span reads AE.

The protein belongs to the methyltransferase superfamily. RNA methyltransferase RsmG family.

Its subcellular location is the cytoplasm. Specifically methylates the N7 position of guanine in position 535 of 16S rRNA. The chain is Ribosomal RNA small subunit methyltransferase G from Bacillus mycoides (strain KBAB4) (Bacillus weihenstephanensis).